The following is a 104-amino-acid chain: Complex III assembly factor LYRM7 (104 aa).

At S60 the chain carries Phosphoserine.

It belongs to the complex I LYR family. Interacts with UQCRFS1.

The protein localises to the mitochondrion matrix. In terms of biological role, assembly factor required for Rieske Fe-S protein UQCRFS1 incorporation into the cytochrome b-c1 (CIII) complex. Functions as a chaperone, binding to this subunit within the mitochondrial matrix and stabilizing it prior to its translocation and insertion into the late CIII dimeric intermediate within the mitochondrial inner membrane. The polypeptide is Complex III assembly factor LYRM7 (Lyrm7) (Mus musculus (Mouse)).